Consider the following 1104-residue polypeptide: Receptor-mediated endocytosis protein 6 (1104 aa).

The Ras-GAP domain occupies 156 to 389 (LKIAQVVCYL…EMMDSLLVEN (234 aa)). Residues 663-682 (SSLAKQPSGMVSSASAQNIP) are disordered. The VPS9 domain occupies 966-1104 (QKKDKLLQSV…SAVEYIKTIL (139 aa)).

The protein belongs to the GAPVD1 family. As to quaternary structure, interacts with GDP-bound rab-5. Interacts with alpha-adaptin.

The protein localises to the membrane. It localises to the cytoplasmic vesicle. It is found in the clathrin-coated vesicle. Functionally, acts both as a GTPase-activating protein (GAP) and a guanine nucleotide exchange factor (GEF), and participates in endocytosis. Acts by regulating the activation of rab-5 by exchanging bound GDP for free GTP at clathrin coated pits. The sequence is that of Receptor-mediated endocytosis protein 6 (rme-6) from Caenorhabditis briggsae.